A 421-amino-acid polypeptide reads, in one-letter code: Telomeric repeat-binding factor 1 (421 aa).

The disordered stretch occupies residues 1–30 (MAETVSSAARDAPSREGWTDSDSPEQEEVG). N-acetylalanine is present on alanine 2. Positions 49–255 (ENAELVAEVE…AATKVVENEK (207 aa)) are TRFH mediates dimerization. A Glycyl lysine isopeptide (Lys-Gly) (interchain with G-Cter in SUMO2) cross-link involves residue lysine 200. Position 206 is a phosphoserine; by ATM (serine 206). Positions 252–365 (ENEKARTQAS…PDTDDKSGRR (114 aa)) are interaction with RLIM. Residues 253–266 (NEKARTQASKDRPD) show a composition bias toward basic and acidic residues. Residues 253-366 (NEKARTQASK…DTDDKSGRRK (114 aa)) are disordered. Polar residues predominate over residues 284–310 (VNGQQSTETEPLVDTVSSIRSHKNALS). Residues 313–367 (KHRRAPSDFSRNEARTGTLQCETTMERNRRTSGRNRLCVSENQPDTDDKSGRRKR) carry the Nuclear localization signal motif. The HTH myb-type domain occupies 362-419 (SGRRKRQTWLWEEDRILKCGVKKYGEGNWAKILSHYKFNNRTSVMLKDRWRTMKRLKL). A DNA-binding region (H-T-H motif) is located at residues 390–415 (WAKILSHYKFNNRTSVMLKDRWRTMK).

Homodimer; can contain both isoforms. Found in a complex with POT1; TINF2 and TNKS1. Interacts with ATM, TINF2, TNKS1, TNKS2, PINX1, NEK2 and MAPRE1. Component of the shelterin complex (telosome) composed of TERF1, TERF2, TINF2, TERF2IP ACD and POT1. Interacts with RLIM (via N-terminus). Interacts with FBXO4. Interaction with TINF2 protects against interaction with FBXO4 and subsequent polyubiquitination and proteasomal degradation. Interacts with GNL3L; this interaction promotes homodimerization. Interacts with TIN2. Interactions with GNL3L and TIN2 are mutually exclusive. Interacts with RTEL1. Interacts with CCDC79/TERB1. Post-translationally, phosphorylated preferentially on Ser-219 in an ATM-dependent manner in response to ionizing DNA damage. In terms of processing, ADP-ribosylation by TNKS1 or TNKS2 diminishes its ability to bind to telomeric DNA. Ubiquitinated by RLIM/RNF12, leading to its degradation by the proteasome. Ubiquitinated by a SCF (SKP1-CUL1-F-box protein) ubiquitin-protein ligase complex, leading to its degradation by the proteasome.

The protein localises to the nucleus. Its subcellular location is the chromosome. It is found in the telomere. The protein resides in the cytoplasm. It localises to the cytoskeleton. The protein localises to the spindle. Binds the telomeric double-stranded 5'-TTAGGG-3' repeat and negatively regulates telomere length. Involved in the regulation of the mitotic spindle. Component of the shelterin complex (telosome) that is involved in the regulation of telomere length and protection. Shelterin associates with arrays of double-stranded 5'-TTAGGG-3' repeats added by telomerase and protects chromosome ends; without its protective activity, telomeres are no longer hidden from the DNA damage surveillance and chromosome ends are inappropriately processed by DNA repair pathways. The chain is Telomeric repeat-binding factor 1 (Terf1) from Mus musculus (Mouse).